A 291-amino-acid polypeptide reads, in one-letter code: Formamidopyrimidine-DNA glycosylase (291 aa).

Residue Pro-2 is the Schiff-base intermediate with DNA of the active site. Glu-3 (proton donor) is an active-site residue. Residue Lys-58 is the Proton donor; for beta-elimination activity of the active site. DNA contacts are provided by His-100, Arg-123, and Lys-166. The FPG-type zinc-finger motif lies at 257-291 (SVYGREGKECSRCGMHIVRIVQSGRSSFYCPQCQK). The Proton donor; for delta-elimination activity role is filled by Arg-281.

Belongs to the FPG family. In terms of assembly, monomer. Requires Zn(2+) as cofactor.

It catalyses the reaction Hydrolysis of DNA containing ring-opened 7-methylguanine residues, releasing 2,6-diamino-4-hydroxy-5-(N-methyl)formamidopyrimidine.. The catalysed reaction is 2'-deoxyribonucleotide-(2'-deoxyribose 5'-phosphate)-2'-deoxyribonucleotide-DNA = a 3'-end 2'-deoxyribonucleotide-(2,3-dehydro-2,3-deoxyribose 5'-phosphate)-DNA + a 5'-end 5'-phospho-2'-deoxyribonucleoside-DNA + H(+). In terms of biological role, involved in base excision repair of DNA damaged by oxidation or by mutagenic agents. Acts as a DNA glycosylase that recognizes and removes damaged bases. Has a preference for oxidized purines, such as 7,8-dihydro-8-oxoguanine (8-oxoG). Has AP (apurinic/apyrimidinic) lyase activity and introduces nicks in the DNA strand. Cleaves the DNA backbone by beta-delta elimination to generate a single-strand break at the site of the removed base with both 3'- and 5'-phosphates. This chain is Formamidopyrimidine-DNA glycosylase, found in Bartonella bacilliformis (strain ATCC 35685 / KC583 / Herrer 020/F12,63).